Here is a 462-residue protein sequence, read N- to C-terminus: Cysteine desulfurase, mitochondrial (462 aa).

Pyridoxal 5'-phosphate contacts are provided by residues 132–133 (AT), Asn-212, Gln-240, and 260–262 (SGH). Residue Lys-263 is modified to N6-(pyridoxal phosphate)lysine. Thr-300 provides a ligand contact to pyridoxal 5'-phosphate. Catalysis depends on Cys-386, which acts as the Cysteine persulfide intermediate. Residue Cys-386 coordinates [2Fe-2S] cluster.

Belongs to the class-V pyridoxal-phosphate-dependent aminotransferase family. NifS/IscS subfamily. As to quaternary structure, component of the mitochondrial core iron-sulfur cluster (ISC) assembly complex at least composed of the cystein desulfurase Nfs1, the scaffold protein IscU, the accessory protein bcn92/Isd11/Lyrm4, and probably fh/frataxin. Interacts with bcn92/Isd11/Lyrm4 and IscU. Pyridoxal 5'-phosphate serves as cofactor. As to expression, ubiquitous expression at high levels in any life stage.

Its subcellular location is the mitochondrion. It is found in the nucleus. It carries out the reaction (sulfur carrier)-H + L-cysteine = (sulfur carrier)-SH + L-alanine. With respect to regulation, active when in complex with bcn92/Isd11/Lyrm4. L-cysteine binding kinetics are reduced in the presence of bcn92/Isd11/Lyrm4 and IscU. Activity is regulated by other components of the mitochondrial core iron-sulfur cluster (ISC) complex; Activity is reduced in the presence of IscU but enhanced when both IscU and fh/frataxin are present. In terms of biological role, catalyzes the removal of elemental sulfur from cysteine to produce alanine. It supplies the inorganic sulfur for iron-sulfur (Fe-S) clusters. This is Cysteine desulfurase, mitochondrial from Drosophila melanogaster (Fruit fly).